A 397-amino-acid polypeptide reads, in one-letter code: Elongation factor Tu (397 aa).

The 198-residue stretch at 10-207 (LPHVNVGTIG…TLDSYIPEPV (198 aa)) folds into the tr-type G domain. The segment at 19–26 (GHVDHGKT) is G1. 19-26 (GHVDHGKT) contacts GTP. Thr26 contacts Mg(2+). The G2 stretch occupies residues 60 to 64 (GITIN). The tract at residues 81–84 (DCPG) is G3. GTP-binding positions include 81-85 (DCPGH) and 136-139 (NKAD). A G4 region spans residues 136 to 139 (NKAD). Residues 174–176 (SAR) form a G5 region.

It belongs to the TRAFAC class translation factor GTPase superfamily. Classic translation factor GTPase family. EF-Tu/EF-1A subfamily. In terms of assembly, monomer.

Its subcellular location is the cytoplasm. It carries out the reaction GTP + H2O = GDP + phosphate + H(+). GTP hydrolase that promotes the GTP-dependent binding of aminoacyl-tRNA to the A-site of ribosomes during protein biosynthesis. The chain is Elongation factor Tu from Pseudomonas putida (strain ATCC 700007 / DSM 6899 / JCM 31910 / BCRC 17059 / LMG 24140 / F1).